A 348-amino-acid chain; its full sequence is Phosphoribosylformylglycinamidine cyclo-ligase (348 aa).

Belongs to the AIR synthase family.

The protein localises to the cytoplasm. The enzyme catalyses 2-formamido-N(1)-(5-O-phospho-beta-D-ribosyl)acetamidine + ATP = 5-amino-1-(5-phospho-beta-D-ribosyl)imidazole + ADP + phosphate + H(+). The protein operates within purine metabolism; IMP biosynthesis via de novo pathway; 5-amino-1-(5-phospho-D-ribosyl)imidazole from N(2)-formyl-N(1)-(5-phospho-D-ribosyl)glycinamide: step 2/2. In Geotalea uraniireducens (strain Rf4) (Geobacter uraniireducens), this protein is Phosphoribosylformylglycinamidine cyclo-ligase.